The primary structure comprises 230 residues: PKHD-type hydroxylase Xfasm12_1709 (230 aa).

One can recognise a Fe2OG dioxygenase domain in the interval 78–182 (RTLPPRFNRY…RIASFFWVQS (105 aa)). H96, D98, and H163 together coordinate Fe cation. R173 is a binding site for 2-oxoglutarate.

Requires Fe(2+) as cofactor. L-ascorbate serves as cofactor.

The polypeptide is PKHD-type hydroxylase Xfasm12_1709 (Xylella fastidiosa (strain M12)).